Here is a 360-residue protein sequence, read N- to C-terminus: MLMFLTHFAEHVTPFNVFRYITFRTGGAMITSALIVFLFGPTIINSLRVRQGKGQPIRADGPQTHFKKAGTPTMGGLMIMTGILASCLLWANLASVYVWVVLMVSVGFGAIGFYDDYLKVTKQSDKGFSGKARLGIEFLIAAIAAFTIMRAGQEPFSSSLTFPFVKQLVINLSWFFIPFAAFVMVGAGNAVNLTDGLDGLAIVPVMVAAASFGFIAYLSGNAIFADYLQIHFVPGTGELAVVLGAVIGAGLGFLWFNAPPAAIFMGDTGSLALGGMLGTVAVATKHEIVLAIIGGLFVMEALSVIIQVGFFKMTGRRVFLMAPIHHHFEKKGWTESQVVIRFWIVAIILAMIGLSTLKLR.

Transmembrane regions (helical) follow at residues 27–47 (GAMITSALIVFLFGPTIINSL), 71–91 (TPTMGGLMIMTGILASCLLWA), 93–113 (LASVYVWVVLMVSVGFGAIGF), 128–148 (FSGKARLGIEFLIAAIAAFTI), 168–188 (LVINLSWFFIPFAAFVMVGAG), 199–219 (GLAIVPVMVAAASFGFIAYLS), 239–259 (LAVVLGAVIGAGLGFLWFNAP), 262–282 (AIFMGDTGSLALGGMLGTVAV), 288–308 (IVLAIIGGLFVMEALSVIIQV), and 337–357 (QVVIRFWIVAIILAMIGLSTL).

The protein belongs to the glycosyltransferase 4 family. MraY subfamily. The cofactor is Mg(2+).

It is found in the cell inner membrane. The enzyme catalyses UDP-N-acetyl-alpha-D-muramoyl-L-alanyl-gamma-D-glutamyl-meso-2,6-diaminopimeloyl-D-alanyl-D-alanine + di-trans,octa-cis-undecaprenyl phosphate = di-trans,octa-cis-undecaprenyl diphospho-N-acetyl-alpha-D-muramoyl-L-alanyl-D-glutamyl-meso-2,6-diaminopimeloyl-D-alanyl-D-alanine + UMP. It functions in the pathway cell wall biogenesis; peptidoglycan biosynthesis. Catalyzes the initial step of the lipid cycle reactions in the biosynthesis of the cell wall peptidoglycan: transfers peptidoglycan precursor phospho-MurNAc-pentapeptide from UDP-MurNAc-pentapeptide onto the lipid carrier undecaprenyl phosphate, yielding undecaprenyl-pyrophosphoryl-MurNAc-pentapeptide, known as lipid I. The protein is Phospho-N-acetylmuramoyl-pentapeptide-transferase of Brucella abortus (strain S19).